We begin with the raw amino-acid sequence, 498 residues long: Acetylcholine receptor subunit alpha-type acr-16 (498 aa).

An N-terminal signal peptide occupies residues 1 to 19; it reads MSVCTLLISCAILAAPTLG. The Extracellular segment spans residues 20 to 230; sequence SLQERRLYED…FYLHMRRRTL (211 aa). 2 N-linked (GlcNAc...) asparagine glycosylation sites follow: N43 and N93. 2 cysteine pairs are disulfide-bonded: C147–C161 and C211–C212. 3 helical membrane-spanning segments follow: residues 231 to 252, 261 to 279, and 295 to 314; these read YYGFNLIMPCILTTLMTLLGFT, ITLQITVLLSICFFLSIVS, and FFTCCMIVVTASTVFTVYVL. The Cytoplasmic segment spans residues 315–472; sequence NLHYRTPETH…WKFAAMVVDR (158 aa). The chain crosses the membrane as a helical span at residues 473 to 493; that stretch reads LCLYVFTIFIIVSTIGIFWSA.

Belongs to the ligand-gated ion channel (TC 1.A.9) family. Acetylcholine receptor (TC 1.A.9.1) subfamily. As to expression, expressed in the body wall muscle.

It is found in the postsynaptic cell membrane. The protein localises to the cell membrane. After binding acetylcholine, the AChR responds by an extensive change in conformation that affects all subunits and leads to opening of an ion-conducting channel across the plasma membrane. A subunit of the levamisole-insensitive nicotinic receptor. This Caenorhabditis elegans protein is Acetylcholine receptor subunit alpha-type acr-16 (acr-16).